An 89-amino-acid polypeptide reads, in one-letter code: Small ribosomal subunit protein bS20 (89 aa).

Residues 1 to 28 (MTLANIKSAKKRAIQSEKRRQHNASQRS) are disordered.

The protein belongs to the bacterial ribosomal protein bS20 family.

Binds directly to 16S ribosomal RNA. This is Small ribosomal subunit protein bS20 from Pasteurella multocida (strain Pm70).